The primary structure comprises 249 residues: Large ribosomal subunit protein uL10m (249 aa).

The N-terminal 31 residues, 1–31, are a transit peptide targeting the mitochondrion; it reads MLQLRFMPGWVPRNGFFGLKETIGTVHKRFY. The segment at 226–249 is disordered; sequence SHNDNQKPKEDVESTTDAESKGSK.

Belongs to the universal ribosomal protein uL10 family. As to quaternary structure, component of the mitochondrial large ribosomal subunit (mt-LSU). Mature yeast 74S mitochondrial ribosomes consist of a small (37S) and a large (54S) subunit. The 37S small subunit contains a 15S ribosomal RNA (15S mt-rRNA) and 34 different proteins. The 54S large subunit contains a 21S rRNA (21S mt-rRNA) and 46 different proteins.

It localises to the mitochondrion. In terms of biological role, component of the mitochondrial ribosome (mitoribosome), a dedicated translation machinery responsible for the synthesis of mitochondrial genome-encoded proteins, including at least some of the essential transmembrane subunits of the mitochondrial respiratory chain. The mitoribosomes are attached to the mitochondrial inner membrane and translation products are cotranslationally integrated into the membrane. This Saccharomyces cerevisiae (strain ATCC 204508 / S288c) (Baker's yeast) protein is Large ribosomal subunit protein uL10m (MRPL11).